A 254-amino-acid chain; its full sequence is Zinc finger FYVE domain-containing protein 21 (254 aa).

The FYVE-type zinc finger occupies 44–104 (DKECPRCMQC…QCAGCAPVSR (61 aa)). Residues Cys50, Cys53, Cys66, Cys69, Cys74, Cys77, Cys96, and Cys99 each coordinate Zn(2+). Residues 107-254 (ADFYDRQLKL…AKLLYESRDQ (148 aa)) form a PH-like region.

Interacts with PTK2/FAK1.

It localises to the cell junction. The protein localises to the focal adhesion. Its subcellular location is the cytoplasmic vesicle. The protein resides in the endosome. Its function is as follows. Plays a role in cell adhesion, and thereby in cell motility which requires repeated formation and disassembly of focal adhesions. Regulates microtubule-induced PTK2/FAK1 dephosphorylation, an event important for focal adhesion disassembly, as well as integrin beta-1/ITGB1 cell surface expression. The polypeptide is Zinc finger FYVE domain-containing protein 21 (ZFYVE21) (Bos taurus (Bovine)).